The chain runs to 49 residues: Disintegrin echistatin-gamma (49 aa).

Residues 1–47 (DCASGPCCRDCKFLEEGTICNMARGDDMDDYCNGKTCDCPRNPHKWP) form the Disintegrin domain. 4 disulfide bridges follow: C2–C11, C7–C32, C8–C37, and C20–C39. The short motif at 24-26 (RGD) is the Cell attachment site element.

The protein belongs to the venom metalloproteinase (M12B) family. P-II subfamily. P-IIa sub-subfamily. In terms of assembly, monomer. Expressed by the venom gland.

Its subcellular location is the secreted. In terms of biological role, has antiplatelet activities on guinea pig, followed by human, rabbit and rat platelet-rich plasma. The sequence is that of Disintegrin echistatin-gamma from Echis pyramidum leakeyi (Leakey's carpet viper).